The chain runs to 193 residues: 7-methyl-GTP pyrophosphatase (193 aa).

Residue aspartate 69 is the Proton acceptor of the active site.

It belongs to the Maf family. YceF subfamily. It depends on a divalent metal cation as a cofactor.

It localises to the cytoplasm. The enzyme catalyses N(7)-methyl-GTP + H2O = N(7)-methyl-GMP + diphosphate + H(+). Its function is as follows. Nucleoside triphosphate pyrophosphatase that hydrolyzes 7-methyl-GTP (m(7)GTP). May have a dual role in cell division arrest and in preventing the incorporation of modified nucleotides into cellular nucleic acids. This is 7-methyl-GTP pyrophosphatase from Chromohalobacter salexigens (strain ATCC BAA-138 / DSM 3043 / CIP 106854 / NCIMB 13768 / 1H11).